A 458-amino-acid chain; its full sequence is Carboxypeptidase N catalytic chain (458 aa).

A signal peptide spans 1 to 20; that stretch reads MSDLLSVFLHLLLLFKLVAP. The Peptidase M14 domain maps to 24–338; it reads RHHRYDDLVR…EALIQFLEQV (315 aa). Cys42 and Cys104 are disulfide-bonded. Residues His86, Glu89, and His216 each coordinate Zn(2+). Residues Cys271 and Cys311 are joined by a disulfide bond. Residue Glu308 is the Proton donor/acceptor of the active site. O-linked (GalNAc...) threonine glycosylation is found at Thr400, Thr402, and Thr409. Residues 423–458 are disordered; the sequence is SPVRRAPSRRHGVRAKVQPQARKKEMEMRQLQRGPA.

It belongs to the peptidase M14 family. As to quaternary structure, tetramer of two catalytic chains and two glycosylated inactive chains. It depends on Zn(2+) as a cofactor. In terms of tissue distribution, synthesized in the liver and secreted in plasma.

The protein resides in the secreted. Its subcellular location is the extracellular space. It catalyses the reaction Release of a C-terminal basic amino acid, preferentially lysine.. Functionally, protects the body from potent vasoactive and inflammatory peptides containing C-terminal Arg or Lys (such as kinins or anaphylatoxins) which are released into the circulation. The polypeptide is Carboxypeptidase N catalytic chain (CPN1) (Homo sapiens (Human)).